The sequence spans 273 residues: Phosphate import ATP-binding protein PstB (273 aa).

The ABC transporter domain occupies 27 to 268; sequence VTVRNLNFYY…PSDRRTQDYI (242 aa). Residue 59-66 coordinates ATP; the sequence is GPSGCGKS.

This sequence belongs to the ABC transporter superfamily. Phosphate importer (TC 3.A.1.7) family. The complex is composed of two ATP-binding proteins (PstB), two transmembrane proteins (PstC and PstA) and a solute-binding protein (PstS).

Its subcellular location is the cell inner membrane. It carries out the reaction phosphate(out) + ATP + H2O = ADP + 2 phosphate(in) + H(+). In terms of biological role, part of the ABC transporter complex PstSACB involved in phosphate import. Responsible for energy coupling to the transport system. In Bradyrhizobium diazoefficiens (strain JCM 10833 / BCRC 13528 / IAM 13628 / NBRC 14792 / USDA 110), this protein is Phosphate import ATP-binding protein PstB.